The following is a 416-amino-acid chain: Protein P47 (416 aa).

Belongs to the TULIP P47 family. As to quaternary structure, part of a crude toxin extract that includes BoNTA2/NTNH, P47, OrfX2 and OrfX3; OrfX1 was not detected.

Its function is as follows. Part of a botulinum neurotoxin type A2 (BoNT) locus; may be part of a progenitor toxin complex required to protect BoNT during its passage through the host gastrointestinal tract. The sequence is that of Protein P47 from Clostridium botulinum (strain Kyoto / Type A2).